A 383-amino-acid polypeptide reads, in one-letter code: GDSL esterase/lipase At1g28610 (383 aa).

Positions 1–22 are cleaved as a signal peptide; that stretch reads MASLDSLVSFFLSTLFVTIVSS. Ser38 functions as the Nucleophile in the catalytic mechanism. 3 N-linked (GlcNAc...) asparagine glycosylation sites follow: Asn134, Asn184, and Asn315. Residues Asp340 and His343 contribute to the active site.

Belongs to the 'GDSL' lipolytic enzyme family.

Its subcellular location is the secreted. The sequence is that of GDSL esterase/lipase At1g28610 from Arabidopsis thaliana (Mouse-ear cress).